The following is a 404-amino-acid chain: MKLPIYLDYSATTPVDPRVAQKMCECLTMEGNFGNPASRSHVFGWKAEEAVENARRQVAELVNADPREIVWTSGATESDNLAIKGVAHFYASKGKHIITSKIEHKAVLDTTRQLEREGFEVTYLEPGEDGLITPAMVAAALREDTILVSVMHVNNEIGTVNDIAAIGELTRSRGVLYHVDAAQSTGKVAIDLERMKVDLMSFSAHKTYGPKGIGALYVRRKPRVRLEAQMHGGGHERGMRSGTLATHQIVGMGEAFRIAREEMAAESRRIAGLSHRFHEQVSTLEEVYLNGSATARVPHNLNLSFNYVEGESLIMSLRDLAVSSGSACTSASLEPSYVLRALGRNDELAHSSIRFTFGRFTTEEEVDYAARKVCEAVGKLRELSPLWDMYKDGVDLSKIEWQAH.

Residues 75–76, N155, Q183, and 203–205 contribute to the pyridoxal 5'-phosphate site; these read AT and SAH. At K206 the chain carries N6-(pyridoxal phosphate)lysine. T243 provides a ligand contact to pyridoxal 5'-phosphate. C328 acts as the Cysteine persulfide intermediate in catalysis. C328 lines the [2Fe-2S] cluster pocket.

The protein belongs to the class-V pyridoxal-phosphate-dependent aminotransferase family. NifS/IscS subfamily. As to quaternary structure, homodimer. Forms a heterotetramer with IscU, interacts with other sulfur acceptors. The cofactor is pyridoxal 5'-phosphate.

The protein localises to the cytoplasm. The catalysed reaction is (sulfur carrier)-H + L-cysteine = (sulfur carrier)-SH + L-alanine. Its pathway is cofactor biosynthesis; iron-sulfur cluster biosynthesis. Its function is as follows. Master enzyme that delivers sulfur to a number of partners involved in Fe-S cluster assembly, tRNA modification or cofactor biosynthesis. Catalyzes the removal of elemental sulfur atoms from cysteine to produce alanine. Functions as a sulfur delivery protein for Fe-S cluster synthesis onto IscU, an Fe-S scaffold assembly protein, as well as other S acceptor proteins. The protein is Cysteine desulfurase IscS of Azotobacter vinelandii (strain DJ / ATCC BAA-1303).